A 953-amino-acid polypeptide reads, in one-letter code: Protein translocase subunit SecA (953 aa).

ATP contacts are provided by residues Gln-84, 102-106 (GEGKT), and Asp-491. Positions 832–953 (EPEPAPEQPS…RAEAKKNKRR (122 aa)) are disordered. Positions 841 to 865 (SVPVSVSRSAEPTPDLQAAAEAAAA) are enriched in low complexity. The span at 898–907 (KGLDAPEKQR) shows a compositional bias: basic and acidic residues. The span at 908-934 (LNYSGPTEQGGVQTTSESAGEQGNGTS) shows a compositional bias: polar residues. The span at 940 to 953 (RAAARAEAKKNKRR) shows a compositional bias: basic and acidic residues.

It belongs to the SecA family. As to quaternary structure, monomer and homodimer. Part of the essential Sec protein translocation apparatus which comprises SecA, SecYEG and auxiliary proteins SecDF. Other proteins may also be involved.

The protein resides in the cell membrane. Its subcellular location is the cytoplasm. The catalysed reaction is ATP + H2O + cellular proteinSide 1 = ADP + phosphate + cellular proteinSide 2.. Functionally, part of the Sec protein translocase complex. Interacts with the SecYEG preprotein conducting channel. Has a central role in coupling the hydrolysis of ATP to the transfer of proteins into and across the cell membrane, serving as an ATP-driven molecular motor driving the stepwise translocation of polypeptide chains across the membrane. The sequence is that of Protein translocase subunit SecA from Saccharopolyspora erythraea (strain ATCC 11635 / DSM 40517 / JCM 4748 / NBRC 13426 / NCIMB 8594 / NRRL 2338).